Reading from the N-terminus, the 182-residue chain is ATP synthase subunit delta 2 (182 aa).

This sequence belongs to the ATPase delta chain family. As to quaternary structure, F-type ATPases have 2 components, F(1) - the catalytic core - and F(0) - the membrane proton channel. F(1) has five subunits: alpha(3), beta(3), gamma(1), delta(1), epsilon(1). F(0) has three main subunits: a(1), b(2) and c(10-14). The alpha and beta chains form an alternating ring which encloses part of the gamma chain. F(1) is attached to F(0) by a central stalk formed by the gamma and epsilon chains, while a peripheral stalk is formed by the delta and b chains.

Its subcellular location is the cell inner membrane. Functionally, f(1)F(0) ATP synthase produces ATP from ADP in the presence of a proton or sodium gradient. F-type ATPases consist of two structural domains, F(1) containing the extramembraneous catalytic core and F(0) containing the membrane proton channel, linked together by a central stalk and a peripheral stalk. During catalysis, ATP synthesis in the catalytic domain of F(1) is coupled via a rotary mechanism of the central stalk subunits to proton translocation. This protein is part of the stalk that links CF(0) to CF(1). It either transmits conformational changes from CF(0) to CF(1) or is implicated in proton conduction. The polypeptide is ATP synthase subunit delta 2 (Photobacterium profundum (strain SS9)).